The following is a 302-amino-acid chain: Deoxyhypusine hydroxylase (302 aa).

M1 is modified (N-acetylmethionine). HEAT-like PBS-type repeat units lie at residues 54 to 80 (LKHELAYCLGQMRDARAIPVLADVLQD), 87 to 113 (VRHEAGEALGAIGNPEVLGLLKQYSTD), 175 to 201 (ERYRAMFALRNVGGKEAALALAEGLQC), 206 to 232 (FRHEVGYVLGQLQHEAAVPGLAATLAR), and 239 to 265 (VRHECAEALGAIARPACLAALREHIED). 3 residues coordinate Fe cation: H56, H89, and E90. 3 residues coordinate Fe cation: H208, H241, and E242.

It belongs to the deoxyhypusine hydroxylase family. The cofactor is Fe(2+).

The catalysed reaction is [eIF5A protein]-deoxyhypusine + AH2 + O2 = [eIF5A protein]-hypusine + A + H2O. The protein operates within protein modification; eIF5A hypusination. Functionally, catalyzes the hydroxylation of the N(6)-(4-aminobutyl)-L-lysine intermediate produced by deoxyhypusine synthase/DHPS on a critical lysine of the eukaryotic translation initiation factor 5A/eIF-5A. This is the second step of the post-translational modification of that lysine into an unusual amino acid residue named hypusine. Hypusination is unique to mature eIF-5A factor and is essential for its function. This is Deoxyhypusine hydroxylase from Mus musculus (Mouse).